Consider the following 783-residue polypeptide: Cilia- and flagella-associated protein 91 (783 aa).

The segment covering 748–760 (EDFELEEEAESLD) has biased composition (acidic residues). The disordered stretch occupies residues 748–783 (EDFELEEEAESLDSEVPTVSVSKTSTIKPTQDEGEG). Residues 764–776 (PTVSVSKTSTIKP) are compositionally biased toward polar residues.

The protein belongs to the CFAP91 family. As to quaternary structure, part of a complex containing MYCBP, AKAP1 and PRKAR2B. Interacts with MYCBP and AKAP1. Interacts with CFAP61. In terms of processing, phosphorylated by PKA. In terms of tissue distribution, expressed in the testis, in cells involved in spermatogenesis.

The protein resides in the cytoplasm. It localises to the mitochondrion. The protein localises to the cytoskeleton. Its subcellular location is the cilium axoneme. In terms of biological role, involved in sperm flagellum axonemal organization and function. May regulate cilium motility through its role in the assembly of the axonemal radial spokes. In Mus musculus (Mouse), this protein is Cilia- and flagella-associated protein 91.